Consider the following 173-residue polypeptide: NADH-ubiquinone oxidoreductase chain 6 (173 aa).

5 helical membrane passes run 1–21, 28–48, 53–73, 87–107, and 139–159; these read MVYFVSMMMIGLILGLMGVAS, AALGLVTAAGVGCGLLVSYGG, LILFLIYLGGMLVVFAYTAAL, VLMYVGIYLTGLVIAGKYFLV, and LGGWMLVLSGWVLLVTLFVVL.

Belongs to the complex I subunit 6 family.

The protein localises to the mitochondrion membrane. It carries out the reaction a ubiquinone + NADH + 5 H(+)(in) = a ubiquinol + NAD(+) + 4 H(+)(out). Core subunit of the mitochondrial membrane respiratory chain NADH dehydrogenase (Complex I) that is believed to belong to the minimal assembly required for catalysis. Complex I functions in the transfer of electrons from NADH to the respiratory chain. The immediate electron acceptor for the enzyme is believed to be ubiquinone. This is NADH-ubiquinone oxidoreductase chain 6 (MT-ND6) from Scyliorhinus canicula (Small-spotted catshark).